The chain runs to 506 residues: Nucleosome assembly protein 1-like 3 (506 aa).

2 disordered regions span residues 1–95 (MAEA…LGTN) and 157–307 (PTEE…KRED). A compositionally biased stretch (low complexity) spans 35 to 70 (SSSSSSSTSDSSSSSSTSGSSSGSGSSSSSSGSTSS). Residues 157–178 (PTEEECEWNSEDEEFSSDEEVQ) show a composition bias toward acidic residues. The span at 196 to 296 (PKENPEVKAE…ERLQDSVDLK (101 aa)) shows a compositional bias: basic and acidic residues.

It belongs to the nucleosome assembly protein (NAP) family.

It localises to the nucleus. This chain is Nucleosome assembly protein 1-like 3 (NAP1L3), found in Homo sapiens (Human).